Consider the following 566-residue polypeptide: Potassium-transporting ATPase potassium-binding subunit (566 aa).

The next 12 helical transmembrane spans lie at 6–26, 60–80, 128–148, 167–187, 247–267, 276–296, 331–351, 361–381, 383–403, 423–443, 492–512, and 530–550; these read VALLTSYMLVLLLLAWPLGIA, AAAILVFNLLGAALLFLLMLF, LGLTVHNFLSAANGIAVAFVL, IWRITVYLLLPLSVIYALFLA, LTNFVQMVSILLIPAALCICF, VGSALLWTMGIMLSVAALLIM, FGLWASSLFATITTAASCGAV, LGGLIPMVLMQLGEVVFGGVG, GWYGMMLFVFLTVFLAGLMIG, IGLLIPPALVLLGTALAVILP, LMFVGRFGVMLPVLAIAGALI, and LFVGMLIGVVLLIGALTFIPA.

It belongs to the KdpA family. As to quaternary structure, the system is composed of three essential subunits: KdpA, KdpB and KdpC.

Its subcellular location is the cell inner membrane. Functionally, part of the high-affinity ATP-driven potassium transport (or Kdp) system, which catalyzes the hydrolysis of ATP coupled with the electrogenic transport of potassium into the cytoplasm. This subunit binds the periplasmic potassium ions and delivers the ions to the membrane domain of KdpB through an intramembrane tunnel. This is Potassium-transporting ATPase potassium-binding subunit from Tolumonas auensis (strain DSM 9187 / NBRC 110442 / TA 4).